Reading from the N-terminus, the 364-residue chain is Ribosomal RNA large subunit methyltransferase M (364 aa).

S-adenosyl-L-methionine contacts are provided by residues Ser-194, 227–230, Asp-246, Asp-266, and Asp-284; that span reads CPGG. Lys-313 acts as the Proton acceptor in catalysis.

The protein belongs to the class I-like SAM-binding methyltransferase superfamily. RNA methyltransferase RlmE family. RlmM subfamily. Monomer.

It localises to the cytoplasm. It catalyses the reaction cytidine(2498) in 23S rRNA + S-adenosyl-L-methionine = 2'-O-methylcytidine(2498) in 23S rRNA + S-adenosyl-L-homocysteine + H(+). In terms of biological role, catalyzes the 2'-O-methylation at nucleotide C2498 in 23S rRNA. The sequence is that of Ribosomal RNA large subunit methyltransferase M from Actinobacillus succinogenes (strain ATCC 55618 / DSM 22257 / CCUG 43843 / 130Z).